We begin with the raw amino-acid sequence, 191 residues long: GDP-mannose pyrophosphatase (191 aa).

GDP-alpha-D-mannose is bound by residues Y17, 38-40 (KRE), R67, and 85-87 (AGL). The Nudix hydrolase domain maps to 43–180 (DRGNGATILL…EIRDGKTVLL (138 aa)). Mg(2+) is bound by residues A85, E100, and E104. The Nudix box motif lies at 86–106 (GLLDNDEPEVCIRKEAIEETG). GDP-alpha-D-mannose contacts are provided by residues E104, E127, 150–151 (DE), and K176. E151 is a Mg(2+) binding site.

This sequence belongs to the Nudix hydrolase family. NudK subfamily. As to quaternary structure, homodimer. It depends on Mg(2+) as a cofactor.

It catalyses the reaction GDP-alpha-D-mannose + H2O = alpha-D-mannose 1-phosphate + GMP + 2 H(+). Nucleoside diphosphate sugar hydrolase that hydrolyzes GDP-mannose as its preferred substrate, yielding GMP and mannose-1-phosphate. The protein is GDP-mannose pyrophosphatase (nudK) of Salmonella choleraesuis (strain SC-B67).